We begin with the raw amino-acid sequence, 496 residues long: MGYFYLTAETWTLLVAFVTLLLIYAYWPYGTFKRLGISGPKPVPFFGTMLHYRRGFFTFDEECKKKYGKVWGIYDGRQPVLCVTDPEIIKAVLVKECLSFFTNRRNFHLNGPLYDALSVAEDDQWKRIRSVLSPSFTSGRLKEMFEIMKNHSANLIRSMKKKADKDEPLDLKEFFGSYSMDVVTSTAFSVDIDSLNNPSDPFVTNIKKMLKFDFLNPLFLAVAFFPFLGPILEKFELSFFPKSVTDFFYASLEKIKSNREASQQKSRVDFLQLMIDSQKNSGAQQDKSLTDHEILSQSMIFIFAGYETSSSSLTFLAYNLATNPEVMKKLQEEIDATFPNKAPVHYQPLMEMEYLDCVINESLRLFPIAARLERVAKAAVEINGIVIPKDMVVMIPTWPLHRDPEIWPEPEAFKPERFSKKNKDNIDPYIYMPFGSGPRNCIGMRFALVLIKLAVVEILQQYSFSVCKETEVPFEMDIQGLLAPKRPIQLKLVPRS.

Position 441 (Cys441) interacts with heme.

The protein belongs to the cytochrome P450 family. Heme serves as cofactor. In terms of tissue distribution, highly expressed in liver and intestine. Moderate expression in gill and spleen. Low expression in kidney, brain and heart.

The protein localises to the endoplasmic reticulum membrane. Its subcellular location is the microsome membrane. It carries out the reaction an organic molecule + reduced [NADPH--hemoprotein reductase] + O2 = an alcohol + oxidized [NADPH--hemoprotein reductase] + H2O + H(+). Functionally, putative steroid 6-beta-hydroxylase. This is Cytochrome P450 3A56 (cyp3a56) from Fundulus heteroclitus (Killifish).